A 218-amino-acid chain; its full sequence is DNA endonuclease I-CeuI (218 aa).

Gly-65 and Glu-66 together coordinate Mg(2+). An interaction with DNA region spans residues 71–75 (ISTKK). A Mg(2+)-binding site is contributed by Asp-86. Interaction with DNA regions lie at residues 90–94 (NVTQH), 114–116 (RHK), and 191–199 (KQQGQSNEG).

This sequence belongs to the LAGLIDADG endonuclease family. As to quaternary structure, homodimer. Requires Mg(2+) as cofactor.

The protein localises to the plastid. It is found in the chloroplast. Functionally, endonuclease involved in intron homing. Recognizes a degenerate sequence of 17-19 bp to produce a staggered cut 5 bp downstream from the CeLSU.5 intron insertion site. The polypeptide is DNA endonuclease I-CeuI (Chlamydomonas moewusii (Chlamydomonas eugametos)).